Here is a 111-residue protein sequence, read N- to C-terminus: Transcription factor S (111 aa).

8 residues coordinate Zn(2+): C4, C7, C24, C27, C72, C75, C100, and C103. A C4-type zinc finger spans residues 4-27 (CPKCGSMMMPRKENGKTVYKCSKC). The TFIIS-type zinc finger occupies 68–108 (RGISCPSCGNDEAYFWILQTRSADEPATRFYKCTKCGKVWR).

This sequence belongs to the archaeal RpoM/eukaryotic RPA12/RPB9/RPC11 RNA polymerase family.

In terms of biological role, induces RNA cleavage activity in the RNA polymerase. In its presence, the cleavage activity of the RNA polymerase truncates the RNA back to position +15 in a stepwise manner by releasing mainly dinucleotides from the 3'-end of the nascent RNA. The truncated RNAs are able to continue elongation. Involved in transcriptional proofreading and fidelity. Misincorporation of nucleotides during elongation of transcription leads to arrested elongation complexes which are rescued by TFS-promoted removal of a dinucleotide from the 3'-end. TFS is able to induce a cleavage resynthesis cycle in stalled elongation complexes (resulting from the next missing nucleotide or a reduced incorporation rate of a wrong nucleotide) preventing misincorporation and enabling proofreading in a post-incorporation manner. Pausing of elongation complexes is the main determinant of TFS-induced RNA cleavage. This Sulfolobus acidocaldarius (strain ATCC 33909 / DSM 639 / JCM 8929 / NBRC 15157 / NCIMB 11770) protein is Transcription factor S.